The following is a 78-amino-acid chain: D-alanyl carrier protein (78 aa).

In terms of domain architecture, Carrier spans 1 to 78; sequence MAFRENVLEI…MIITQLEALK (78 aa). S36 is subject to O-(pantetheine 4'-phosphoryl)serine.

The protein belongs to the DltC family. 4'-phosphopantetheine is transferred from CoA to a specific serine of apo-DCP.

The protein localises to the cytoplasm. Its pathway is cell wall biogenesis; lipoteichoic acid biosynthesis. Carrier protein involved in the D-alanylation of lipoteichoic acid (LTA). The loading of thioester-linked D-alanine onto DltC is catalyzed by D-alanine--D-alanyl carrier protein ligase DltA. The DltC-carried D-alanyl group is further transferred to cell membrane phosphatidylglycerol (PG) by forming an ester bond, probably catalyzed by DltD. D-alanylation of LTA plays an important role in modulating the properties of the cell wall in Gram-positive bacteria, influencing the net charge of the cell wall. The protein is D-alanyl carrier protein of Listeria innocua serovar 6a (strain ATCC BAA-680 / CLIP 11262).